An 89-amino-acid polypeptide reads, in one-letter code: Helix-loop-helix protein 15 (89 aa).

Residues 1–32 (MLMEDGGLDTTSEEYRKLSKAERRKRRRATPK) are disordered. A compositionally biased stretch (basic residues) spans 22-32 (ERRKRRRATPK). A basic motif region spans residues 32–45 (KYRNLHATRERIRV). The 53-residue stretch at 32-84 (KYRNLHATRERIRVESFNMAFSQLRALLPTLPVEKKLSKIEILRFSIAYISFL) folds into the bHLH domain. A helix-loop-helix motif region spans residues 46–84 (ESFNMAFSQLRALLPTLPVEKKLSKIEILRFSIAYISFL).

As to expression, expressed in sensory head neurons of the lateral ganglion.

Its subcellular location is the nucleus. In terms of biological role, transcription factor which binds the E box motif 5'-CA[TC][AG]TG-3'. Involved in modulating physiological aging, probably by regulating expression of branched-chain amino acid transferase-1, bcat-1. The protein is Helix-loop-helix protein 15 of Caenorhabditis elegans.